Consider the following 64-residue polypeptide: Endodeoxyribonuclease toxin RalR (64 aa).

Ca(2+) is required as a cofactor. Requires Mg(2+) as cofactor.

With respect to regulation, inhibited by EDTA. Its function is as follows. Toxic component of a type I toxin-antitoxin (TA) system. Upon overexpression inhibits growth and reduces colony-forming units in both the presence and absence of the Rac prophage, cells become filamentous. Has deoxyribonuclease activity (probably endonucleolytic), does not digest RNA. Its toxic effects are neutralized by sRNA antitoxin RalA, which is encoded in trans on the opposite DNA strand. Has RAL-like activity. This chain is Endodeoxyribonuclease toxin RalR (ralR), found in Escherichia coli (strain K12).